Reading from the N-terminus, the 34-residue chain is Kappa-theraphotoxin-Scg1a (34 aa).

Cystine bridges form between Cys-2–Cys-16, Cys-9–Cys-21, and Cys-15–Cys-28. Positions 4–6 are involved in active face; the sequence is YLF.

It belongs to the neurotoxin 10 (Hwtx-1) family. 09 (HaTx) subfamily. Expressed by the venom gland.

Its subcellular location is the secreted. In terms of biological role, reversibly inhibits potassium currents in oocytes expressing Kv2.1/KCNB1 channels (Kd=2.7 uM). Acts by shifting activation of the channel to more depolarized voltages. The toxin may bind to the S3b-S4 helices of the voltage sensor paddle. One, two, three or four toxin molecules may bind the Kv2.1/KCNB1 channel. It shows low to moderate affinity for lipid bilayers. It partitions into the bilayer membrane, where it stabilizes at the water/membrane interface. This is Kappa-theraphotoxin-Scg1a from Stromatopelma calceatum griseipes (Feather leg baboon tarantula).